A 214-amino-acid polypeptide reads, in one-letter code: MPDFKIVISDPQSVEPKRIKVKVKANDQIKSIAGEKEGKAVPQAKVNEKTKQLLNIDTLITLEITKQEGDKKVKVKSHFKVEVDNNVPDNEVWISKTMAEKFGAEDFEAIAYRTKTLQISIDQDKATNLVGLKIGDTFEANQLIGLPVKLKITGGSDNSGFPMRFDVTGAAKRKILLSGPPGFYPNEDGERRRKTIRGNTISQEIVQINTIIVR.

This sequence belongs to the eukaryotic ribosomal protein eS6 family.

This chain is Small ribosomal subunit protein eS6, found in Saccharolobus islandicus (strain L.S.2.15 / Lassen #1) (Sulfolobus islandicus).